We begin with the raw amino-acid sequence, 330 residues long: Beta-ketoacyl-[acyl-carrier-protein] synthase III 2 (330 aa).

Residues Cys-118 and His-246 contribute to the active site. The segment at 247–251 (QANLR) is ACP-binding. Asn-276 is a catalytic residue.

Belongs to the thiolase-like superfamily. FabH family. In terms of assembly, homodimer.

It localises to the cytoplasm. The catalysed reaction is malonyl-[ACP] + acetyl-CoA + H(+) = 3-oxobutanoyl-[ACP] + CO2 + CoA. The protein operates within lipid metabolism; fatty acid biosynthesis. Its function is as follows. Catalyzes the condensation reaction of fatty acid synthesis by the addition to an acyl acceptor of two carbons from malonyl-ACP. Catalyzes the first condensation reaction which initiates fatty acid synthesis and may therefore play a role in governing the total rate of fatty acid production. Possesses both acetoacetyl-ACP synthase and acetyl transacylase activities. Its substrate specificity determines the biosynthesis of branched-chain and/or straight-chain of fatty acids. The protein is Beta-ketoacyl-[acyl-carrier-protein] synthase III 2 of Streptomyces coelicolor (strain ATCC BAA-471 / A3(2) / M145).